A 185-amino-acid chain; its full sequence is MISSNDFRPGVSIELDGAVWRVVEFLHVKPGKGSAFVRTKLKNVQTGNVIERTFRAGETVPQATLEKRTMQHTYKDGEDYVFMDMESYEEARLTPAQVGDRAKYLKEGMEVNIVKWGEQVLEVELPNSVVLEVVQTDPGVKGDTATGGSKPAIVETGAQVMVPLFISVGERIRIDTRSDTYLGRE.

This sequence belongs to the elongation factor P family.

It is found in the cytoplasm. Its pathway is protein biosynthesis; polypeptide chain elongation. In terms of biological role, involved in peptide bond synthesis. Stimulates efficient translation and peptide-bond synthesis on native or reconstituted 70S ribosomes in vitro. Probably functions indirectly by altering the affinity of the ribosome for aminoacyl-tRNA, thus increasing their reactivity as acceptors for peptidyl transferase. The protein is Elongation factor P of Thermosynechococcus vestitus (strain NIES-2133 / IAM M-273 / BP-1).